A 402-amino-acid chain; its full sequence is Digeranylgeranylglycerophospholipid reductase (402 aa).

G15, E34, C45, A46, G48, R99, A123, D280, G292, and I293 together coordinate FAD.

This sequence belongs to the geranylgeranyl reductase family. DGGGPL reductase subfamily. FAD serves as cofactor.

It catalyses the reaction a 2,3-bis-O-phytanyl-sn-glycerol 1-phospholipid + 8 oxidized 2[4Fe-4S]-[ferredoxin] = a 2,3-bis-O-(geranylgeranyl)-sn-glycerol 1-phospholipid + 8 reduced 2[4Fe-4S]-[ferredoxin] + 16 H(+). The catalysed reaction is 2,3-bis-O-(phytanyl)-sn-glycerol 1-phosphate + 8 oxidized 2[4Fe-4S]-[ferredoxin] = 2,3-bis-O-(geranylgeranyl)-sn-glycerol 1-phosphate + 8 reduced 2[4Fe-4S]-[ferredoxin] + 16 H(+). The enzyme catalyses a 2,3-bis-O-phytanyl-sn-glycerol 1-phospholipid + 8 A = a 2,3-bis-O-(geranylgeranyl)-sn-glycerol 1-phospholipid + 8 AH2. It carries out the reaction CDP-2,3-bis-O-(geranylgeranyl)-sn-glycerol + 8 AH2 = CDP-2,3-bis-O-(phytanyl)-sn-glycerol + 8 A. It catalyses the reaction archaetidylserine + 8 AH2 = 2,3-bis-O-phytanyl-sn-glycero-3-phospho-L-serine + 8 A. Its pathway is membrane lipid metabolism; glycerophospholipid metabolism. In terms of biological role, is involved in the reduction of 2,3-digeranylgeranylglycerophospholipids (unsaturated archaeols) into 2,3-diphytanylglycerophospholipids (saturated archaeols) in the biosynthesis of archaeal membrane lipids. Catalyzes the formation of archaetidic acid (2,3-di-O-phytanyl-sn-glyceryl phosphate) from 2,3-di-O-geranylgeranylglyceryl phosphate (DGGGP) via the hydrogenation of each double bond of the isoprenoid chains. Is also probably able to reduce double bonds of geranyl groups in CDP-2,3-bis-O-(geranylgeranyl)-sn-glycerol and archaetidylserine, thus acting at various stages in the biosynthesis of archaeal membrane lipids. The protein is Digeranylgeranylglycerophospholipid reductase of Methanospirillum hungatei JF-1 (strain ATCC 27890 / DSM 864 / NBRC 100397 / JF-1).